The primary structure comprises 488 residues: MGRPLHLVLLSASLAGLLLLGESLFIRREQANNILARVTRANSFLEEMKKGHLERECMEETCSYEEAREVFEDSDKTNEFWNKYKDGDQCETSPCQNQGKCKDGLGEYTCTCLEGFEGKNCELFTRKLCSLDNGDCDQFCHEEQNSVVCSCARGYTLADNGKACIPTGPYPCGKQTLERRKRSVAQATSSSGEAPDSITWKPYDAADLDPTENPFDLLDFNQTQPERGDNNLTRIVGGQECKDGECPWQALLINEENEGFCGGTILSEFYILTAAHCLYQAKRFKVRVGDRNTEQEEGGEAVHEVEVVIKHNRFTKETYDFDIAVLRLKTPITFRMNVAPACLPERDWAESTLMTQKTGIVSGFGRTHEKGRQSTRLKMLEVPYVDRNSCKLSSSFIITQNMFCAGYDTKQEDACQGDSGGPHVTRFKDTYFVTGIVSWGEGCARKGKYGIYTKVTAFLKWIDRSMKTRGLPKAKSHAPEVITSSPLK.

The first 31 residues, 1-31 (MGRPLHLVLLSASLAGLLLLGESLFIRREQA), serve as a signal peptide directing secretion. Residues 32-40 (NNILARVTR) constitute a propeptide that is removed on maturation. The Gla domain occupies 41–85 (ANSFLEEMKKGHLERECMEETCSYEEAREVFEDSDKTNEFWNKYK). 11 positions are modified to 4-carboxyglutamate: Glu-46, Glu-47, Glu-54, Glu-56, Glu-59, Glu-60, Glu-65, Glu-66, Glu-69, Glu-72, and Glu-79. Cysteines 57 and 62 form a disulfide. The region spanning 86–122 (DGDQCETSPCQNQGKCKDGLGEYTCTCLEGFEGKNCE) is the EGF-like 1; calcium-binding domain. 11 disulfides stabilise this stretch: Cys-90-Cys-101, Cys-95-Cys-110, Cys-112-Cys-121, Cys-129-Cys-140, Cys-136-Cys-149, Cys-151-Cys-164, Cys-172-Cys-342, Cys-241-Cys-246, Cys-261-Cys-277, Cys-390-Cys-404, and Cys-415-Cys-443. At Asp-103 the chain carries (3R)-3-hydroxyaspartate. The EGF-like 2 domain maps to 125 to 165 (TRKLCSLDNGDCDQFCHEEQNSVVCSCARGYTLADNGKACI). Residues 183 to 203 (SVAQATSSSGEAPDSITWKPY) form an O-glycosylated at one site region. Positions 183-234 (SVAQATSSSGEAPDSITWKPYDAADLDPTENPFDLLDFNQTQPERGDNNLTR) are cleaved as a propeptide — activation peptide. Residues Thr-199 and Thr-211 are each glycosylated (O-linked (GalNAc...) threonine). Asn-221 and Asn-231 each carry an N-linked (GlcNAc...) asparagine glycan. The Peptidase S1 domain maps to 235 to 467 (IVGGQECKDG…FLKWIDRSMK (233 aa)). Active-site charge relay system residues include His-276 and Asp-322. Ser-419 acts as the Charge relay system in catalysis. An O-glycosylated at one site region spans residues 476–485 (SHAPEVITSS).

This sequence belongs to the peptidase S1 family. As to quaternary structure, the two chains are formed from a single-chain precursor by the excision of two Arg residues and are held together by 1 or more disulfide bonds. Forms a heterodimer with SERPINA5. Interacts (inactive and activated) with ixolaris, an anticoagulant protein from Ixodes scapularis saliva. Interacts (activated) with iripin-8, a serine protease inhibitor from Ixodes ricinus saliva. Interacts (activated) with FXa-directed anticoagulant from Aedes albopictus saliva. Interacts (activated) with guianensin, an anticoagulant protein from Simulium guianense saliva. Interacts (activated) with simukunin, an anticoagulant protein from Simulium vittatum saliva. In terms of processing, the vitamin K-dependent, enzymatic carboxylation of some glutamate residues allows the modified protein to bind calcium. N- and O-glycosylated. O-glycosylated with core 1 or possibly core 8 glycans. Post-translationally, proteolytically cleaved and activated by cathepsin CTSG. The activation peptide is cleaved by factor IXa (in the intrinsic pathway), or by factor VIIa (in the extrinsic pathway). In terms of processing, the iron and 2-oxoglutarate dependent 3-hydroxylation of aspartate and asparagine is (R) stereospecific within EGF domains. Plasma; synthesized in the liver.

Its subcellular location is the secreted. The catalysed reaction is Selective cleavage of Arg-|-Thr and then Arg-|-Ile bonds in prothrombin to form thrombin.. Inhibited by SERPINA5 and SERPINA10. In terms of biological role, factor Xa is a vitamin K-dependent glycoprotein that converts prothrombin to thrombin in the presence of factor Va, calcium and phospholipid during blood clotting. Factor Xa activates pro-inflammatory signaling pathways in a protease-activated receptor (PAR)-dependent manner. Up-regulates expression of protease-activated receptors (PARs) F2R, F2RL1 and F2RL2 in dermal microvascular endothelial cells. Triggers the production of pro-inflammatory cytokines, such as MCP-1/CCL2 and IL6, in cardiac fibroblasts and umbilical vein endothelial cells in PAR-1/F2R-dependent manner. Triggers the production of pro-inflammatory cytokines, such as MCP-1/CCL2, IL6, TNF-alpha/TNF, IL-1beta/IL1B, IL8/CXCL8 and IL18, in endothelial cells and atrial tissues. Induces expression of adhesion molecules, such as ICAM1, VCAM1 and SELE, in endothelial cells and atrial tissues. Increases expression of phosphorylated ERK1/2 in dermal microvascular endothelial cells and atrial tissues. Triggers activation of the transcription factor NF-kappa-B in dermal microvascular endothelial cells and atrial tissues. Activates pro-inflammatory and pro-fibrotic responses in dermal fibroblasts and enhances wound healing probably via PAR-2/F2RL1-dependent mechanism. Activates barrier protective signaling responses in endothelial cells in PAR-2/F2RL1-dependent manner; the activity depends on the cleavage of PAR-2/F2RL1 by factor Xa. Up-regulates expression of plasminogen activator inhibitor 1 (SERPINE1) in atrial tissues. The protein is Coagulation factor X (F10) of Homo sapiens (Human).